Consider the following 421-residue polypeptide: 3-isopropylmalate dehydratase large subunit (421 aa).

[4Fe-4S] cluster-binding residues include Cys300, Cys360, and Cys363.

The protein belongs to the aconitase/IPM isomerase family. LeuC type 2 subfamily. In terms of assembly, heterodimer of LeuC and LeuD. It depends on [4Fe-4S] cluster as a cofactor.

The enzyme catalyses (2R,3S)-3-isopropylmalate = (2S)-2-isopropylmalate. It functions in the pathway amino-acid biosynthesis; L-leucine biosynthesis; L-leucine from 3-methyl-2-oxobutanoate: step 2/4. Its function is as follows. Catalyzes the isomerization between 2-isopropylmalate and 3-isopropylmalate, via the formation of 2-isopropylmaleate. The polypeptide is 3-isopropylmalate dehydratase large subunit (Moorella thermoacetica (strain ATCC 39073 / JCM 9320)).